The following is a 473-amino-acid chain: H(+)/Cl(-) exchange transporter ClcA (473 aa).

Residues 1-32 (MKTDTSTFLAQQIVRLRRRDQIRRLMQRDKTP) are Cytoplasmic-facing. Residues 33 to 69 (LAILFMAAVVGTLTGLVGVAFEKAVSWVQNMRIGALV) form a helical membrane-spanning segment. The Periplasmic portion of the chain corresponds to 70–76 (QVADHAF). The chain crosses the membrane as a helical span at residues 77–100 (LLWPLAFILSALLAMVGYFLVRKF). Residues 106-110 (GSGIP) carry the Selectivity filter part_1 motif. Residue Ser-107 participates in chloride binding. Residues 109–116 (IPEIEGAL) constitute an intramembrane region (helical). Topologically, residues 117–123 (EELRPVR) are cytoplasmic. The next 2 membrane-spanning stretches (helical) occupy residues 124 to 141 (WWRVLPVKFIGGMGTLGA) and 148 to 166 (EGPTVQIGGNLGRMVLDVF). A Selectivity filter part_2 motif is present at residues 146–150 (GREGP). Topologically, residues 167–176 (RMRSAEARHT) are cytoplasmic. 2 consecutive intramembrane regions (helical) follow at residues 177–189 (LLATGAAAGLSAA) and 193–201 (PLAGILFII). Over 202-214 (EEMRPQFRYNLIS) the chain is Cytoplasmic. Residues 215–232 (IKAVFTGVIMSSIVFRIF) form a helical membrane-spanning segment. Residues 233–252 (NGEAPIIEVGKLSDAPVNTL) lie on the Periplasmic side of the membrane. A helical membrane pass occupies residues 253-281 (WLYLILGIIFGCVGPVFNSLVLRTQDMFQ). The Cytoplasmic portion of the chain corresponds to 282–287 (RFHGGE). Residues 288 to 309 (IKKWVLMGGAIGGLCGILGLIE) traverse the membrane as a helical segment. The Periplasmic portion of the chain corresponds to 310–329 (PEAAGGGFNLIPIAAAGNFS). Helical transmembrane passes span 330–349 (VGLLLFIFIARVVTTLLCFS) and 355–376 (GIFAPMLALGTLLGTAFGMAAA). The Selectivity filter part_3 motif lies at 355-359 (GIFAP). Residues Ile-356 and Phe-357 each contribute to the chloride site. The Periplasmic segment spans residues 377-386 (VLFPQYHLEA). Positions 387–401 (GTFAIAGMGALMAAS) form an intramembrane region, helical. Residues 402–404 (VRA) constitute an intramembrane region (note=Loop between two helices). Positions 405–416 (PLTGIVLVLEMT) form an intramembrane region, helical. The note=Loop between two helices intramembrane region spans 417–421 (DNYQL). The helical transmembrane segment at 422–438 (ILPMIITCLGATLLAQF) threads the bilayer. At 439-473 (LGGKPLYSTILARTLAKQDAEQAAKNQNAPAGENT) the chain is on the cytoplasmic side. Tyr-445 provides a ligand contact to chloride.

It belongs to the chloride channel (TC 2.A.49) family. ClcA subfamily. In terms of assembly, homodimer.

The protein resides in the cell inner membrane. It carries out the reaction 2 chloride(in) + H(+)(out) = 2 chloride(out) + H(+)(in). Its function is as follows. Proton-coupled chloride transporter. Functions as antiport system and exchanges two chloride ions for 1 proton. Probably acts as an electrical shunt for an outwardly-directed proton pump that is linked to amino acid decarboxylation, as part of the extreme acid resistance (XAR) response. This chain is H(+)/Cl(-) exchange transporter ClcA, found in Salmonella agona (strain SL483).